The chain runs to 598 residues: Serine/threonine-protein kinase cot-1 (598 aa).

3 stretches are compositionally biased toward polar residues: residues 1-16 (MDNT…TNDT), 24-33 (TYPTTPSTFP), and 99-126 (PRTS…TQTE). Disordered stretches follow at residues 1–46 (MDNT…GGSQ), 80–148 (GSAG…NQKK), and 163–190 (RARE…RESI). Residues 214 to 518 (YQTIKIIGKG…AHEIKSHAFF (305 aa)) enclose the Protein kinase domain. Residues 220–228 (IGKGAFGEV) and Lys243 each bind ATP. The Proton acceptor role is filled by Asp337. The AGC-kinase C-terminal domain maps to 519–598 (RGVEFDSLRR…TFKRFDNNFR (80 aa)).

It belongs to the protein kinase superfamily. STE Ser/Thr protein kinase family. COT1 subfamily.

The catalysed reaction is L-seryl-[protein] + ATP = O-phospho-L-seryl-[protein] + ADP + H(+). It carries out the reaction L-threonyl-[protein] + ATP = O-phospho-L-threonyl-[protein] + ADP + H(+). Protein kinase required for hyphal elongation. The sequence is that of Serine/threonine-protein kinase cot-1 (cot-1) from Neurospora crassa (strain ATCC 24698 / 74-OR23-1A / CBS 708.71 / DSM 1257 / FGSC 987).